The sequence spans 336 residues: Delta(1)-pyrroline-2-carboxylate reductase (336 aa).

The active-site Charge relay system is serine 47. The Proton donor role is filled by histidine 48. Arginine 52 provides a ligand contact to substrate. Residue 120–124 participates in NADP(+) binding; it reads HFSAL. Threonine 160 is a substrate binding site. 178 to 180 contributes to the NADP(+) binding site; sequence DFA. Residue 186 to 187 participates in substrate binding; the sequence is RG. Residue aspartate 188 is the Charge relay system of the active site. Residues 229–230 and 304–310 each bind NADP(+); these read HK and RLPSQRR.

This sequence belongs to the LDH2/MDH2 oxidoreductase family. Homodimer.

The catalysed reaction is L-proline + NAD(+) = 1-pyrroline-2-carboxylate + NADH + H(+). It carries out the reaction L-proline + NADP(+) = 1-pyrroline-2-carboxylate + NADPH + H(+). Its function is as follows. Catalyzes the reduction of Delta(1)-pyrroline-2-carboxylate (Pyr2C) to L-proline, using NADPH as the electron donor. May be involved in a degradation pathway that converts trans-3-hydroxy-L-proline (t3LHyp) to L-proline. This Pseudomonas fluorescens (strain ATCC BAA-477 / NRRL B-23932 / Pf-5) protein is Delta(1)-pyrroline-2-carboxylate reductase.